Reading from the N-terminus, the 388-residue chain is Succinate--CoA ligase [ADP-forming] subunit beta (388 aa).

The ATP-grasp domain occupies 9–245 (KELLASYGLP…KSQENERELK (237 aa)). Residues Lys-46, 53 to 55 (GRG), Glu-100, Tyr-103, and Glu-108 contribute to the ATP site. Mg(2+)-binding residues include Asn-200 and Asp-214. Residues Asn-265 and 322-324 (GIV) each bind substrate.

The protein belongs to the succinate/malate CoA ligase beta subunit family. In terms of assembly, heterotetramer of two alpha and two beta subunits. It depends on Mg(2+) as a cofactor.

The enzyme catalyses succinate + ATP + CoA = succinyl-CoA + ADP + phosphate. The catalysed reaction is GTP + succinate + CoA = succinyl-CoA + GDP + phosphate. The protein operates within carbohydrate metabolism; tricarboxylic acid cycle; succinate from succinyl-CoA (ligase route): step 1/1. Succinyl-CoA synthetase functions in the citric acid cycle (TCA), coupling the hydrolysis of succinyl-CoA to the synthesis of either ATP or GTP and thus represents the only step of substrate-level phosphorylation in the TCA. The beta subunit provides nucleotide specificity of the enzyme and binds the substrate succinate, while the binding sites for coenzyme A and phosphate are found in the alpha subunit. The protein is Succinate--CoA ligase [ADP-forming] subunit beta of Neisseria gonorrhoeae (strain NCCP11945).